The chain runs to 338 residues: Isopenicillin N synthase (338 aa).

Residues arginine 89, tyrosine 93, serine 185, and tyrosine 191 each coordinate isopenicillin N. The N-[(5S)-5-amino-5-carboxypentanoyl]-L-cysteinyl-D-valine site is built by arginine 89, tyrosine 93, serine 185, tyrosine 191, histidine 216, and aspartate 218. The Fe2OG dioxygenase domain maps to threonine 182 to leucine 290. Residues histidine 216, aspartate 218, and histidine 272 each coordinate Fe(2+). Arginine 281 contacts 2-oxoglutarate. Serine 283 is a binding site for isopenicillin N. Serine 283 contributes to the N-[(5S)-5-amino-5-carboxypentanoyl]-L-cysteinyl-D-valine binding site.

Belongs to the iron/ascorbate-dependent oxidoreductase family. As to quaternary structure, monomer. Fe(2+) is required as a cofactor.

The protein localises to the cytoplasm. Its subcellular location is the cytosol. It carries out the reaction N-[(5S)-5-amino-5-carboxypentanoyl]-L-cysteinyl-D-valine + O2 = isopenicillin N + 2 H2O. It participates in antibiotic biosynthesis; penicillin G biosynthesis; penicillin G from L-alpha-aminoadipate and L-cysteine and L-valine: step 2/3. Functionally, isopenicillin N synthase; part of the gene cluster that mediates the biosynthesis of penicillin, the world's most important antibiotic. IpnA catalyzes the cyclization of the tripeptide N-[(5S)-5-amino-5-carboxypentanoyl]-L-cysteinyl-D-valine (LLD-ACV or ACV) to form isopenicillin N (IPN) that contains the beta-lactam nucleus. The penicillin biosynthesis occurs via 3 enzymatic steps, the first corresponding to the production of the tripeptide N-[(5S)-5-amino-5-carboxypentanoyl]-L-cysteinyl-D-valine (LLD-ACV or ACV) by the NRPS pcbAB. The tripeptide ACV is then cyclized to isopenicillin N (IPN) by the isopenicillin N synthase pcbC that forms the beta-lactam nucleus. Finally, the alpha-aminoadipyl side chain is exchanged for phenylacetic acid by the isopenicillin N acyltransferase penDE to yield penicillin in the peroxisomal matrix. The protein is Isopenicillin N synthase (PCBC) of Hapsidospora chrysogena (Acremonium chrysogenum).